A 360-amino-acid chain; its full sequence is Photosystem II protein D1 3 (360 aa).

The next 3 membrane-spanning stretches (helical) occupy residues Tyr-29 to Ile-46, His-118 to Leu-133, and Trp-142 to Ala-156. Residue His-118 participates in chlorophyll a binding. Residue Tyr-126 participates in pheophytin a binding. The [CaMn4O5] cluster site is built by Asp-170 and Glu-189. A helical membrane pass occupies residues Phe-197–Leu-218. His-198 serves as a coordination point for chlorophyll a. Residues His-215 and Ser-264–Phe-265 each bind a quinone. Residue His-215 participates in Fe cation binding. His-272 contributes to the Fe cation binding site. Residues Phe-274–Met-288 form a helical membrane-spanning segment. Residues His-332, Glu-333, Asp-342, and Ala-344 each contribute to the [CaMn4O5] cluster site. Positions Ala-345–Gly-360 are excised as a propeptide.

The protein belongs to the reaction center PufL/M/PsbA/D family. As to quaternary structure, PSII is composed of 1 copy each of membrane proteins PsbA, PsbB, PsbC, PsbD, PsbE, PsbF, PsbH, PsbI, PsbJ, PsbK, PsbL, PsbM, PsbT, PsbX, PsbY, PsbZ, Psb30/Ycf12, peripheral proteins PsbO, CyanoQ (PsbQ), PsbU, PsbV and a large number of cofactors. It forms dimeric complexes. It depends on The D1/D2 heterodimer binds P680, chlorophylls that are the primary electron donor of PSII, and subsequent electron acceptors. It shares a non-heme iron and each subunit binds pheophytin, quinone, additional chlorophylls, carotenoids and lipids. D1 provides most of the ligands for the Mn4-Ca-O5 cluster of the oxygen-evolving complex (OEC). There is also a Cl(-1) ion associated with D1 and D2, which is required for oxygen evolution. The PSII complex binds additional chlorophylls, carotenoids and specific lipids. as a cofactor. In terms of processing, tyr-161 forms a radical intermediate that is referred to as redox-active TyrZ, YZ or Y-Z. Post-translationally, C-terminally processed by CtpA; processing is essential to allow assembly of the oxygen-evolving complex and thus photosynthetic growth.

Its subcellular location is the cellular thylakoid membrane. The catalysed reaction is 2 a plastoquinone + 4 hnu + 2 H2O = 2 a plastoquinol + O2. Functionally, photosystem II (PSII) is a light-driven water:plastoquinone oxidoreductase that uses light energy to abstract electrons from H(2)O, generating O(2) and a proton gradient subsequently used for ATP formation. It consists of a core antenna complex that captures photons, and an electron transfer chain that converts photonic excitation into a charge separation. The D1/D2 (PsbA/PsbD) reaction center heterodimer binds P680, the primary electron donor of PSII as well as several subsequent electron acceptors. This chain is Photosystem II protein D1 3, found in Synechococcus sp. (strain ATCC 27144 / PCC 6301 / SAUG 1402/1) (Anacystis nidulans).